Here is a 528-residue protein sequence, read N- to C-terminus: Phosphoenolpyruvate carboxykinase (ATP) (528 aa).

Residues arginine 56, tyrosine 192, and lysine 198 each coordinate substrate. ATP-binding positions include lysine 198, histidine 217, and 233–241 (GLSGTGKTT). The Mn(2+) site is built by lysine 198 and histidine 217. Aspartate 254 is a Mn(2+) binding site. ATP-binding residues include glutamate 282, arginine 319, and threonine 444. Arginine 319 lines the substrate pocket.

It belongs to the phosphoenolpyruvate carboxykinase (ATP) family. Mn(2+) serves as cofactor.

It is found in the cytoplasm. The catalysed reaction is oxaloacetate + ATP = phosphoenolpyruvate + ADP + CO2. It functions in the pathway carbohydrate biosynthesis; gluconeogenesis. In terms of biological role, involved in the gluconeogenesis. Catalyzes the conversion of oxaloacetate (OAA) to phosphoenolpyruvate (PEP) through direct phosphoryl transfer between the nucleoside triphosphate and OAA. The polypeptide is Phosphoenolpyruvate carboxykinase (ATP) (Lysinibacillus sphaericus (strain C3-41)).